Reading from the N-terminus, the 204-residue chain is Inner membrane-spanning protein YciB (204 aa).

Transmembrane regions (helical) follow at residues 48–68 (ILFA…LYFF), 73–93 (FESM…ATLM), 102–122 (WKPT…QLFT), 147–167 (GAWI…AYAF), and 170–190 (AVWV…FVVG).

It belongs to the YciB family.

It localises to the cell inner membrane. Its function is as follows. Plays a role in cell envelope biogenesis, maintenance of cell envelope integrity and membrane homeostasis. This Nitrosococcus oceani (strain ATCC 19707 / BCRC 17464 / JCM 30415 / NCIMB 11848 / C-107) protein is Inner membrane-spanning protein YciB.